The sequence spans 477 residues: 3-isopropylmalate dehydratase large subunit (477 aa).

[4Fe-4S] cluster contacts are provided by Cys-352, Cys-413, and Cys-416.

Belongs to the aconitase/IPM isomerase family. LeuC type 1 subfamily. Heterodimer of LeuC and LeuD. The cofactor is [4Fe-4S] cluster.

The catalysed reaction is (2R,3S)-3-isopropylmalate = (2S)-2-isopropylmalate. Its pathway is amino-acid biosynthesis; L-leucine biosynthesis; L-leucine from 3-methyl-2-oxobutanoate: step 2/4. Its function is as follows. Catalyzes the isomerization between 2-isopropylmalate and 3-isopropylmalate, via the formation of 2-isopropylmaleate. This Pseudomonas putida (strain ATCC 47054 / DSM 6125 / CFBP 8728 / NCIMB 11950 / KT2440) protein is 3-isopropylmalate dehydratase large subunit.